Reading from the N-terminus, the 913-residue chain is Protein SEY1 homolog (913 aa).

Residues Met-1–Asn-825 lie on the Cytoplasmic side of the membrane. Residues Gly-33–Cys-288 enclose the GB1/RHD3-type G domain. Residue Gly-43–Ser-50 participates in GTP binding. Disordered regions lie at residues Ala-89–Pro-108 and Thr-436–Gly-455. 2 coiled-coil regions span residues Asp-636–Leu-659 and Ile-703–Asn-727. Residues Val-826–Thr-846 form a helical membrane-spanning segment. At Arg-847–Phe-849 the chain is on the lumenal side. A helical transmembrane segment spans residues Phe-850–Leu-870. At Tyr-871 to Asp-913 the chain is on the cytoplasmic side.

Belongs to the TRAFAC class dynamin-like GTPase superfamily. GB1/RHD3 GTPase family. RHD3 subfamily.

Its subcellular location is the endoplasmic reticulum membrane. Its function is as follows. Probable GTP-binding protein involved in generating and maintaining the structure of the tubular endoplasmic reticulum network. This Plasmodium chabaudi chabaudi protein is Protein SEY1 homolog.